We begin with the raw amino-acid sequence, 272 residues long: GTP cyclohydrolase FolE2 (272 aa).

It belongs to the GTP cyclohydrolase IV family.

It carries out the reaction GTP + H2O = 7,8-dihydroneopterin 3'-triphosphate + formate + H(+). It functions in the pathway cofactor biosynthesis; 7,8-dihydroneopterin triphosphate biosynthesis; 7,8-dihydroneopterin triphosphate from GTP: step 1/1. Functionally, converts GTP to 7,8-dihydroneopterin triphosphate. The sequence is that of GTP cyclohydrolase FolE2 from Polynucleobacter asymbioticus (strain DSM 18221 / CIP 109841 / QLW-P1DMWA-1) (Polynucleobacter necessarius subsp. asymbioticus).